The sequence spans 774 residues: Lon protease 2 (774 aa).

Positions 5-198 (YPLMPLRDIV…LLLEILFREL (194 aa)) constitute a Lon N-terminal domain. Position 350–357 (350–357 (GPPGVGKT)) interacts with ATP. Positions 588-769 (RDEVGLATGL…DQVLEQALLS (182 aa)) constitute a Lon proteolytic domain. Residues serine 675 and lysine 718 contribute to the active site.

Belongs to the peptidase S16 family. As to quaternary structure, homohexamer. Organized in a ring with a central cavity.

It is found in the cytoplasm. It carries out the reaction Hydrolysis of proteins in presence of ATP.. In terms of biological role, ATP-dependent serine protease that mediates the selective degradation of mutant and abnormal proteins as well as certain short-lived regulatory proteins. Required for cellular homeostasis and for survival from DNA damage and developmental changes induced by stress. Degrades polypeptides processively to yield small peptide fragments that are 5 to 10 amino acids long. Binds to DNA in a double-stranded, site-specific manner. The polypeptide is Lon protease 2 (Desulfotalea psychrophila (strain LSv54 / DSM 12343)).